The following is a 224-amino-acid chain: 7-cyano-7-deazaguanine synthase (224 aa).

Residue 8–18 (LSGGMDSAAVI) coordinates ATP. 4 residues coordinate Zn(2+): Cys186, Cys196, Cys199, and Cys202.

The protein belongs to the QueC family. Requires Zn(2+) as cofactor.

The enzyme catalyses 7-carboxy-7-deazaguanine + NH4(+) + ATP = 7-cyano-7-deazaguanine + ADP + phosphate + H2O + H(+). Its pathway is purine metabolism; 7-cyano-7-deazaguanine biosynthesis. In terms of biological role, catalyzes the ATP-dependent conversion of 7-carboxy-7-deazaguanine (CDG) to 7-cyano-7-deazaguanine (preQ(0)). This Xanthomonas euvesicatoria pv. vesicatoria (strain 85-10) (Xanthomonas campestris pv. vesicatoria) protein is 7-cyano-7-deazaguanine synthase.